A 544-amino-acid polypeptide reads, in one-letter code: CTP synthase (544 aa).

The segment at 1 to 265 (MTKFIFVTGG…DNIITEQLQL (265 aa)) is amidoligase domain. Residue serine 13 coordinates CTP. UTP is bound at residue serine 13. ATP contacts are provided by residues 14-19 (SLGKGI) and aspartate 71. 2 residues coordinate Mg(2+): aspartate 71 and glutamate 139. Residues 146-148 (DIE), 186-191 (KTKPTQ), and lysine 222 each bind CTP. UTP-binding positions include 186–191 (KTKPTQ) and lysine 222. A Glutamine amidotransferase type-1 domain is found at 290–544 (KIAMVGKYVD…VKAALNNKKA (255 aa)). Glycine 353 serves as a coordination point for L-glutamine. Cysteine 380 functions as the Nucleophile; for glutamine hydrolysis in the catalytic mechanism. L-glutamine contacts are provided by residues 381-384 (LGMQ), glutamate 404, and arginine 471. Active-site residues include histidine 517 and glutamate 519.

The protein belongs to the CTP synthase family. Homotetramer.

The enzyme catalyses UTP + L-glutamine + ATP + H2O = CTP + L-glutamate + ADP + phosphate + 2 H(+). It carries out the reaction L-glutamine + H2O = L-glutamate + NH4(+). The catalysed reaction is UTP + NH4(+) + ATP = CTP + ADP + phosphate + 2 H(+). It participates in pyrimidine metabolism; CTP biosynthesis via de novo pathway; CTP from UDP: step 2/2. With respect to regulation, allosterically activated by GTP, when glutamine is the substrate; GTP has no effect on the reaction when ammonia is the substrate. The allosteric effector GTP functions by stabilizing the protein conformation that binds the tetrahedral intermediate(s) formed during glutamine hydrolysis. Inhibited by the product CTP, via allosteric rather than competitive inhibition. Its function is as follows. Catalyzes the ATP-dependent amination of UTP to CTP with either L-glutamine or ammonia as the source of nitrogen. Regulates intracellular CTP levels through interactions with the four ribonucleotide triphosphates. This is CTP synthase from Neisseria meningitidis serogroup A / serotype 4A (strain DSM 15465 / Z2491).